Reading from the N-terminus, the 108-residue chain is Con-Ins K1 (108 aa).

The first 24 residues, 1-24 (MTTSSYFLLVALGLLLYVCQSSFG), serve as a signal peptide directing secretion. Residues 25–28 (SPHT) constitute a propeptide that is removed on maturation. 3 disulfides stabilise this stretch: cysteine 41/cysteine 90, cysteine 53/cysteine 103, and cysteine 89/cysteine 94. Glutamate 44 is modified (4-carboxyglutamate). The propeptide at 57–83 (RKRRGFPSMLKARAKRNEAFLLQRDGR) is c peptide. At glutamate 87 the chain carries 4-carboxyglutamate. Glutamine 107 carries the glutamine amide modification.

It belongs to the insulin family. Heterodimer of A and B chains; disulfide-linked. Expressed by the venom gland.

Its subcellular location is the secreted. Its function is as follows. This venom insulin, from a fish-hunting cone snail, facilitates prey capture by rapidly inducing hypoglycemic shock. It is one of the smallest known insulin found in nature and lacks the C-terminal segment of the B chain that, in human insulin, mediates engagement of the insulin receptor (INSR) and assembly of the hormone's hexameric storage form. Despite lacking this segment, it both binds and activates human insulin receptor (long isoform (HIR-B)) with a moderate potency (EC(50)=30.45 nM). In vivo, intraperitoneal injection of this peptide into zebrafish lowers blood glucose with a lower potency than human insulin. In addition, when applied to water, this peptide reduces overall locomotor activity of zebrafish larvae, observed as a significant decrease in the percentage of time spent swimming and movement frequency. When tested on a mouse model of diabetes, this insulin also lowers blood glucose with a 20-fold lower potency than human insulin. This is Con-Ins K1 from Conus kinoshitai (Kinoshita's cone).